The primary structure comprises 239 residues: Serine protease SplC (239 aa).

The signal sequence occupies residues Met1 to Ala36. Active-site charge relay system residues include His75, Asp113, and Ser193.

This sequence belongs to the peptidase S1B family.

Its subcellular location is the secreted. This Staphylococcus aureus (strain MW2) protein is Serine protease SplC (splC).